A 148-amino-acid polypeptide reads, in one-letter code: Large ribosomal subunit protein bL9 (148 aa).

The segment at 46–65 (QLQQQNKHAEQEREQEIEDA) is disordered. Residues 52 to 65 (KHAEQEREQEIEDA) are compositionally biased toward basic and acidic residues.

Belongs to the bacterial ribosomal protein bL9 family.

Binds to the 23S rRNA. The sequence is that of Large ribosomal subunit protein bL9 from Staphylococcus carnosus (strain TM300).